Reading from the N-terminus, the 217-residue chain is 3-demethoxyubiquinol 3-hydroxylase (217 aa).

Residues E66, E96, H99, E148, E180, and H183 each contribute to the Fe cation site.

It belongs to the COQ7 family. Fe cation is required as a cofactor.

The protein localises to the cell membrane. It catalyses the reaction a 5-methoxy-2-methyl-3-(all-trans-polyprenyl)benzene-1,4-diol + AH2 + O2 = a 3-demethylubiquinol + A + H2O. Its pathway is cofactor biosynthesis; ubiquinone biosynthesis. Catalyzes the hydroxylation of 2-nonaprenyl-3-methyl-6-methoxy-1,4-benzoquinol during ubiquinone biosynthesis. This is 3-demethoxyubiquinol 3-hydroxylase from Xanthomonas oryzae pv. oryzae (strain MAFF 311018).